A 201-amino-acid chain; its full sequence is MIAYIEGRVAEVTEQSCVVVTQGGVGYEVHLPSHLLARLPEQGAAVSFYIHTVVREDALELYGFSGWDERQTFLVLISISKVGAKTALAVLSLYRPDDLRRIVADDDVTALTRVSGIGKKSAQHILLELKYKLKVESLPASAGLAAGVPGSVLRDAVQALGNLGYAEEEAAPVLKNILKQDPDLDVSEALRAALKALAKAR.

The interval 1–65 (MIAYIEGRVA…EDALELYGFS (65 aa)) is domain I. Residues 66–143 (GWDERQTFLV…KVESLPASAG (78 aa)) form a domain II region. Residues 143 to 147 (GLAAG) form a flexible linker region. The domain III stretch occupies residues 148–201 (VPGSVLRDAVQALGNLGYAEEEAAPVLKNILKQDPDLDVSEALRAALKALAKAR).

It belongs to the RuvA family. In terms of assembly, homotetramer. Forms an RuvA(8)-RuvB(12)-Holliday junction (HJ) complex. HJ DNA is sandwiched between 2 RuvA tetramers; dsDNA enters through RuvA and exits via RuvB. An RuvB hexamer assembles on each DNA strand where it exits the tetramer. Each RuvB hexamer is contacted by two RuvA subunits (via domain III) on 2 adjacent RuvB subunits; this complex drives branch migration. In the full resolvosome a probable DNA-RuvA(4)-RuvB(12)-RuvC(2) complex forms which resolves the HJ.

It localises to the cytoplasm. The RuvA-RuvB-RuvC complex processes Holliday junction (HJ) DNA during genetic recombination and DNA repair, while the RuvA-RuvB complex plays an important role in the rescue of blocked DNA replication forks via replication fork reversal (RFR). RuvA specifically binds to HJ cruciform DNA, conferring on it an open structure. The RuvB hexamer acts as an ATP-dependent pump, pulling dsDNA into and through the RuvAB complex. HJ branch migration allows RuvC to scan DNA until it finds its consensus sequence, where it cleaves and resolves the cruciform DNA. The protein is Holliday junction branch migration complex subunit RuvA of Oleidesulfovibrio alaskensis (strain ATCC BAA-1058 / DSM 17464 / G20) (Desulfovibrio alaskensis).